Reading from the N-terminus, the 441-residue chain is tRNA-2-methylthio-N(6)-dimethylallyladenosine synthase (441 aa).

The 116-residue stretch at 2-117 (KGLYIKSYGC…LPELLVKAHR (116 aa)) folds into the MTTase N-terminal domain. 6 residues coordinate [4Fe-4S] cluster: C11, C47, C80, C157, C161, and C164. The 232-residue stretch at 143-374 (KNQETSAFIS…QKLLREQQLA (232 aa)) folds into the Radical SAM core domain.

It belongs to the methylthiotransferase family. MiaB subfamily. In terms of assembly, monomer. Requires [4Fe-4S] cluster as cofactor.

The protein resides in the cytoplasm. It carries out the reaction N(6)-dimethylallyladenosine(37) in tRNA + (sulfur carrier)-SH + AH2 + 2 S-adenosyl-L-methionine = 2-methylsulfanyl-N(6)-dimethylallyladenosine(37) in tRNA + (sulfur carrier)-H + 5'-deoxyadenosine + L-methionine + A + S-adenosyl-L-homocysteine + 2 H(+). Its function is as follows. Catalyzes the methylthiolation of N6-(dimethylallyl)adenosine (i(6)A), leading to the formation of 2-methylthio-N6-(dimethylallyl)adenosine (ms(2)i(6)A) at position 37 in tRNAs that read codons beginning with uridine. This Ehrlichia canis (strain Jake) protein is tRNA-2-methylthio-N(6)-dimethylallyladenosine synthase.